The sequence spans 743 residues: MTTLESLDMPEMTEVEDDTVDIHIDNSKVALLFSKSKVFVHPTSKMKDNISGYLSLSKSKALGNSSVAGSDILLSWVPDSFLKNRPRDLSVFQNAETLSNGSIREWVEIPQHLDYSFSVRLCSIYSIIFRPPRYGWNYGSIVINLRDSGESLPPLFFHDDECISTIEYGKQITRDRFDPFDESGNMFWGGTHLLMQLKKYASLEQSSHESQLYLVNPSPEDTVAFQSVELQKVISNNRLNSSSTPPTPRSSSSIFNPFRRALHDLSFTVLERFSRVTNYGKSEVDRLMEHKVTKSILPHLPRELQVLLESKRVQKLTEEYDPARMFLARWAEGIVEQSESNNSQPVNNAGVWTDAQREEDSSLGPFELVYIEERVKRDDPLSVEQWNSMFNAHGKLQVDVHRVLGIIFHGGIQPSLRKEVWPFLLSVYPWDSTSEERRVIYLSLQEEYCTLKRKWYEDIHKQFNDRWFIEQRNRIEKDVHRTDRQHEYFQIEDLPHPDPQSTFTGTNMNMEMMKDILLTYNEYDTELGYVQGMSDLLAPIYVTFNDNALTFWGMVGLMKRLHFNFLRDQSGMHRQLDTLRLLIEFMDPELFAHLEKTDSSNLFCFFRMLLIYFKREFDWEVLLKLWDVLFTNYLSYDYHIFVAYAIAERHREVLLNQTSAFDEVLKYFNELSGKLALEPTLICAEQCFYQFKNKLALIDRKQMEETNSDEDGSKETDLPTIAPYLRNLLKTSQPQYTPSGKQE.

Residues 411 to 633 (GIQPSLRKEV…KLWDVLFTNY (223 aa)) enclose the Rab-GAP TBC domain.

Its subcellular location is the cytoplasm. The protein resides in the nucleus. Functionally, most effectively accelerates the intrinsic GTPase activity of ypt7. The sequence is that of GTPase-activating protein gyp7 from Schizosaccharomyces pombe (strain 972 / ATCC 24843) (Fission yeast).